Reading from the N-terminus, the 157-residue chain is Protein Smg homolog (157 aa).

The protein belongs to the Smg family.

The sequence is that of Protein Smg homolog from Shewanella piezotolerans (strain WP3 / JCM 13877).